The following is a 167-amino-acid chain: Small ribosomal subunit protein uS5 (167 aa).

The S5 DRBM domain occupies 12–75; it reads LQEKLIAVNR…EKARRNMTTI (64 aa).

It belongs to the universal ribosomal protein uS5 family. In terms of assembly, part of the 30S ribosomal subunit. Contacts proteins S4 and S8.

With S4 and S12 plays an important role in translational accuracy. Functionally, located at the back of the 30S subunit body where it stabilizes the conformation of the head with respect to the body. The chain is Small ribosomal subunit protein uS5 from Vibrio parahaemolyticus serotype O3:K6 (strain RIMD 2210633).